A 697-amino-acid polypeptide reads, in one-letter code: MTELSKYRNIGIFAHVDAGKTTTTERILKLTGKIHKIGEVHDGESTTDFMEQEAERGITIQSAAVSCFWKDHRFNVIDTPGHVDFTVEVYRSLKVLDGGIGVFCGSGGVEPQSETNWRYANDSEVARIIFVNKLDRMGADFLRVVKQTKDVLAANPLVMVLPIGIEDEFCGVVDLLTREAHIWDDSGLPENFEIKPVPADMVDIVEEYREMLIETALEQDDALLEAYMEGVQPSIEDVKRCIRAGTRTMAVFPTYCGSAFKNKGMQLLLDAVVDYLPDPVEVDPQPLTDEEGNENGEFAIVDVDAPFKALAFKIMDDRFGALTFVRIYSGRLKKGDTILNSFTGKTERIGRMVEMQANERNELESAQAGDIIAIVGMKNVQTGHTLCDPKHPCTLEAMVFPEPVISISVTPKDKGGSEKMGIAIGKMIAEDPSFRVETDIDSGETILKGMGELHLDIKVDILKRTYGVDLIVGEPQVAYRETITKEIEDSYTHKKQSGGSGQFGKIDYTIRPGEQNTGFTFTSKVVGGNVPKEFWPAVEKGFKSMMNTGTIAGFPVLDVELVLQDGAFHAVDSSAIAFEIAAKGAFRQSMPKAGAQLLEPIMNVDVFSPDDNVGDVIGDLNRRRGMIKDQNAGVTGVRIKADVPLSEMFGYIGSLRTMTSGRGQFSMEFAHYSPCPNSVSEKVVAQVKERKAAEAKK.

Residues 5 to 280 (SKYRNIGIFA…AVVDYLPDPV (276 aa)) enclose the tr-type G domain. GTP contacts are provided by residues 14–21 (AHVDAGKT), 78–82 (DTPGH), and 132–135 (NKLD).

This sequence belongs to the TRAFAC class translation factor GTPase superfamily. Classic translation factor GTPase family. EF-G/EF-2 subfamily.

It is found in the cytoplasm. Catalyzes the GTP-dependent ribosomal translocation step during translation elongation. During this step, the ribosome changes from the pre-translocational (PRE) to the post-translocational (POST) state as the newly formed A-site-bound peptidyl-tRNA and P-site-bound deacylated tRNA move to the P and E sites, respectively. Catalyzes the coordinated movement of the two tRNA molecules, the mRNA and conformational changes in the ribosome. The sequence is that of Elongation factor G 2 from Shewanella frigidimarina (strain NCIMB 400).